The following is a 427-amino-acid chain: UPF0229 protein YeaH (427 aa).

Over residues 79–90 the composition is skewed to basic and acidic residues; that stretch reads NDHFVQNDRIER. The disordered stretch occupies residues 79-110; sequence NDHFVQNDRIERPQGGGGGSGSGQGQASQDGE. Gly residues predominate over residues 92–102; sequence QGGGGGSGSGQ.

It belongs to the UPF0229 family.

This chain is UPF0229 protein YeaH, found in Shigella boydii serotype 18 (strain CDC 3083-94 / BS512).